The primary structure comprises 152 residues: Protein-export protein SecB (152 aa).

It belongs to the SecB family. In terms of assembly, homotetramer, a dimer of dimers. One homotetramer interacts with 1 SecA dimer.

The protein resides in the cytoplasm. One of the proteins required for the normal export of preproteins out of the cell cytoplasm. It is a molecular chaperone that binds to a subset of precursor proteins, maintaining them in a translocation-competent state. It also specifically binds to its receptor SecA. This chain is Protein-export protein SecB, found in Rickettsia akari (strain Hartford).